Here is a 134-residue protein sequence, read N- to C-terminus: DNA-directed RNA polymerase subunit omega (134 aa).

Belongs to the RNA polymerase subunit omega family. In terms of assembly, the RNAP catalytic core consists of 2 alpha, 1 beta, 1 beta' and 1 omega subunit. When a sigma factor is associated with the core the holoenzyme is formed, which can initiate transcription.

The enzyme catalyses RNA(n) + a ribonucleoside 5'-triphosphate = RNA(n+1) + diphosphate. Its function is as follows. Promotes RNA polymerase assembly. Latches the N- and C-terminal regions of the beta' subunit thereby facilitating its interaction with the beta and alpha subunits. The polypeptide is DNA-directed RNA polymerase subunit omega (Brucella anthropi (strain ATCC 49188 / DSM 6882 / CCUG 24695 / JCM 21032 / LMG 3331 / NBRC 15819 / NCTC 12168 / Alc 37) (Ochrobactrum anthropi)).